The primary structure comprises 493 residues: Uridine 5'-monophosphate synthase (493 aa).

The interval 1 to 207 (MVAQNSDKMR…VAKYIAAVQI (207 aa)) is OPRTase. The segment at 208–233 (NSDGTFVGGDKGDVVRANDLQRTKLT) is domain linker. The interval 234–493 (YENRANLAKS…WAAYQDRVAK (260 aa)) is OMPdecase. Lys320 is an active-site residue.

The protein in the N-terminal section; belongs to the purine/pyrimidine phosphoribosyltransferase family. This sequence in the C-terminal section; belongs to the OMP decarboxylase family.

It catalyses the reaction orotidine 5'-phosphate + diphosphate = orotate + 5-phospho-alpha-D-ribose 1-diphosphate. It carries out the reaction orotidine 5'-phosphate + H(+) = UMP + CO2. Its pathway is pyrimidine metabolism; UMP biosynthesis via de novo pathway; UMP from orotate: step 1/2. It participates in pyrimidine metabolism; UMP biosynthesis via de novo pathway; UMP from orotate: step 2/2. The polypeptide is Uridine 5'-monophosphate synthase (r-l) (Drosophila melanogaster (Fruit fly)).